Consider the following 430-residue polypeptide: Protein translocase subunit SecY (430 aa).

10 helical membrane-spanning segments follow: residues 18–38 (IFFT…PAPG), 68–88 (FSIF…MQLL), 117–137 (FAII…NNYL), 147–167 (VMSY…LIWL), 174–194 (FGVG…TLPS), 217–237 (ILGL…VLEA), 270–290 (VIPV…TLFF), 308–328 (NIGM…YAFV), 368–388 (FVGS…TKFM), and 389–409 (GLPQ…GVAI).

This sequence belongs to the SecY/SEC61-alpha family. Component of the Sec protein translocase complex. Heterotrimer consisting of SecY, SecE and SecG subunits. The heterotrimers can form oligomers, although 1 heterotrimer is thought to be able to translocate proteins. Interacts with the ribosome. Interacts with SecDF, and other proteins may be involved. Interacts with SecA.

It is found in the cell membrane. The central subunit of the protein translocation channel SecYEG. Consists of two halves formed by TMs 1-5 and 6-10. These two domains form a lateral gate at the front which open onto the bilayer between TMs 2 and 7, and are clamped together by SecE at the back. The channel is closed by both a pore ring composed of hydrophobic SecY resides and a short helix (helix 2A) on the extracellular side of the membrane which forms a plug. The plug probably moves laterally to allow the channel to open. The ring and the pore may move independently. The chain is Protein translocase subunit SecY from Staphylococcus epidermidis (strain ATCC 35984 / DSM 28319 / BCRC 17069 / CCUG 31568 / BM 3577 / RP62A).